The chain runs to 118 residues: Ribonuclease P protein component (118 aa).

This sequence belongs to the RnpA family. Consists of a catalytic RNA component (M1 or rnpB) and a protein subunit.

It catalyses the reaction Endonucleolytic cleavage of RNA, removing 5'-extranucleotides from tRNA precursor.. Functionally, RNaseP catalyzes the removal of the 5'-leader sequence from pre-tRNA to produce the mature 5'-terminus. It can also cleave other RNA substrates such as 4.5S RNA. The protein component plays an auxiliary but essential role in vivo by binding to the 5'-leader sequence and broadening the substrate specificity of the ribozyme. This Shewanella baltica (strain OS155 / ATCC BAA-1091) protein is Ribonuclease P protein component.